A 946-amino-acid polypeptide reads, in one-letter code: Bifunctional glutamine synthetase adenylyltransferase/adenylyl-removing enzyme (946 aa).

The interval 1–440 is adenylyl removase; the sequence is MKPLSSPLQQ…VFNELIGDDE (440 aa). An adenylyl transferase region spans residues 449–946; that stretch reads SEQWRELWQD…ASWQKWLVEE (498 aa).

This sequence belongs to the GlnE family. Requires Mg(2+) as cofactor.

It catalyses the reaction [glutamine synthetase]-O(4)-(5'-adenylyl)-L-tyrosine + phosphate = [glutamine synthetase]-L-tyrosine + ADP. The enzyme catalyses [glutamine synthetase]-L-tyrosine + ATP = [glutamine synthetase]-O(4)-(5'-adenylyl)-L-tyrosine + diphosphate. In terms of biological role, involved in the regulation of glutamine synthetase GlnA, a key enzyme in the process to assimilate ammonia. When cellular nitrogen levels are high, the C-terminal adenylyl transferase (AT) inactivates GlnA by covalent transfer of an adenylyl group from ATP to specific tyrosine residue of GlnA, thus reducing its activity. Conversely, when nitrogen levels are low, the N-terminal adenylyl removase (AR) activates GlnA by removing the adenylyl group by phosphorolysis, increasing its activity. The regulatory region of GlnE binds the signal transduction protein PII (GlnB) which indicates the nitrogen status of the cell. This is Bifunctional glutamine synthetase adenylyltransferase/adenylyl-removing enzyme from Shigella sonnei (strain Ss046).